The sequence spans 303 residues: Cyclin-dependent kinase B1-1 (303 aa).

The region spanning 4 to 295 is the Protein kinase domain; it reads YEKLEKVGEG…AKAAMEHPYF (292 aa). ATP contacts are provided by residues 10 to 18 and lysine 33; that span reads VGEGTYGKV. Threonine 14 carries the post-translational modification Phosphothreonine. Tyrosine 15 is modified (phosphotyrosine). Aspartate 136 functions as the Proton acceptor in the catalytic mechanism. A Phosphothreonine modification is found at threonine 170.

It belongs to the protein kinase superfamily. CMGC Ser/Thr protein kinase family. CDC2/CDKX subfamily. Expressed in actively dividing cells: root and shoot apical meristems, and young leaves.

It carries out the reaction L-seryl-[protein] + ATP = O-phospho-L-seryl-[protein] + ADP + H(+). The enzyme catalyses L-threonyl-[protein] + ATP = O-phospho-L-threonyl-[protein] + ADP + H(+). It catalyses the reaction [DNA-directed RNA polymerase] + ATP = phospho-[DNA-directed RNA polymerase] + ADP + H(+). This Oryza sativa subsp. japonica (Rice) protein is Cyclin-dependent kinase B1-1 (CDKB1-1).